A 320-amino-acid chain; its full sequence is Ribosomal RNA large subunit methyltransferase F (320 aa).

Positions Met-1–Asn-20 are disordered.

The protein belongs to the methyltransferase superfamily. METTL16/RlmF family.

It is found in the cytoplasm. It catalyses the reaction adenosine(1618) in 23S rRNA + S-adenosyl-L-methionine = N(6)-methyladenosine(1618) in 23S rRNA + S-adenosyl-L-homocysteine + H(+). Its function is as follows. Specifically methylates the adenine in position 1618 of 23S rRNA. This Saccharophagus degradans (strain 2-40 / ATCC 43961 / DSM 17024) protein is Ribosomal RNA large subunit methyltransferase F.